Reading from the N-terminus, the 304-residue chain is N-acetyl-D-glucosamine kinase (304 aa).

ATP is bound by residues 4–11 and 133–140; these read GFDIGGTK and GFGGGLIF. 4 residues coordinate Zn(2+): histidine 157, cysteine 178, cysteine 180, and cysteine 185.

Belongs to the ROK (NagC/XylR) family. NagK subfamily.

It carries out the reaction N-acetyl-D-glucosamine + ATP = N-acetyl-D-glucosamine 6-phosphate + ADP + H(+). It functions in the pathway cell wall biogenesis; peptidoglycan recycling. In terms of biological role, catalyzes the phosphorylation of N-acetyl-D-glucosamine (GlcNAc) derived from cell-wall degradation, yielding GlcNAc-6-P. In Mannheimia succiniciproducens (strain KCTC 0769BP / MBEL55E), this protein is N-acetyl-D-glucosamine kinase.